A 327-amino-acid polypeptide reads, in one-letter code: Aromatase (327 aa).

Residue Cys-315 coordinates heme.

It belongs to the cytochrome P450 family. Heme serves as cofactor.

The protein resides in the membrane. The catalysed reaction is testosterone + 3 reduced [NADPH--hemoprotein reductase] + 3 O2 = 17beta-estradiol + formate + 3 oxidized [NADPH--hemoprotein reductase] + 4 H2O + 4 H(+). The enzyme catalyses androst-4-ene-3,17-dione + 3 reduced [NADPH--hemoprotein reductase] + 3 O2 = estrone + formate + 3 oxidized [NADPH--hemoprotein reductase] + 4 H2O + 4 H(+). Its function is as follows. Catalyzes the formation of aromatic C18 estrogens from C19 androgens. This Coturnix japonica (Japanese quail) protein is Aromatase (CYP19A1).